Here is a 343-residue protein sequence, read N- to C-terminus: Heat-inducible transcription repressor HrcA (343 aa).

This sequence belongs to the HrcA family.

Negative regulator of class I heat shock genes (grpE-dnaK-dnaJ and groELS operons). Prevents heat-shock induction of these operons. This chain is Heat-inducible transcription repressor HrcA, found in Bacillus cytotoxicus (strain DSM 22905 / CIP 110041 / 391-98 / NVH 391-98).